The sequence spans 1554 residues: MASLNTPECPVMSSRPSMSCGNSSSSGLAIQGHSQRPSQTDPSAVEQAAQDSVIDLTNSDYETCDANRATKRQKLDLRIDVPNTQRAPKARFSQAVSSPFALQDTVPPIRTGRPFWDFGEEVSGFGFQGSLESEIPNDEPEQPDSLPPLPVRPWRYRPQGHSSREETPRVNQNAGAEVQTTPFCIEVPEAAPIFDSGKPLDFYPWKGDHPEDSLTDQTAKQGYYDRVQVSQNESNTARPSLYVQLKHRSGLKLLSSVFTAAIDKRQSHCRVTGFSTFKPPPRVTLTDIKRETWLRDLANPSVPLRRLSRTIPHGIRGRILLDQCVNKAIPIGRAVWLVKCVGANEIRAFKRKGTSAAITHSLEVKWVRDWSINVHQFIESVVTACGTPNWASTMSYVIRFAARLFQEQLLDQALCLDWFLQSLRTAPIGTLPIWLSMLGAYWTSLVRYRKRGRPLAESLLEKLKTILSLEDSGPKKQIADRLSWLIKTFAESHPACFVLPLTWRTYKSTLTTCFCLHLSEDNRKIGALSNRNERIVKAEICRQSGRQSPSQQVICLLDSADSLNDMEILSSGCLNLHFDHGSLIMKILEWVSTSFRRGSARVYVAVRLLRKWRRAGMDTDNCIVNFLQQKADTPGFSPANIYHLVCELVRSQSFAVGKYLQWLMARGAVRNDAPMHPTVQLLAHLPRRKLPSHVWNLRNTLLTKAGFLLSSENQQILNTKRYIHHRLPEVITKPIAGDNEGLFTPSDLSNLNWTIKSEIGHWIREHVSLHRKRYLRTAPNHHNACAIEISALTPAQFFEIRDIIECLGDLSLLADILKHTSSSDNIIVLISAVDTLNYCADSFKAIGALSDLFKSALAGYAHVNKADVSIIELISSLLEVGMKLPGEIPVVAMLRRDLSHFDKKFTGAVSSPVSDHTGESVNIASPAFSEGLHQLLNSGSGMDEPNMNKIFDMLSRKLKQSKEPNASSHEIARHLSQLRVLNSDVFDRLMVKWIISTLKSSPRPHLLTFLPPLIGVGCVTFEAFFALIDRLLKSDSHRQSIQDVSGLRYEMINLLRKEIFYELGSIDLVSYRFKTTREEYITHHAYDALGLVNEALANVNPESTSNPPLVPLLCELIIQNLNAFGPEGAGRIVEEFPNCVDIIHQALDVLLGLKAQVGVQKTQSVVGLIDDLSLSYCLVKLRLLLDANPDGDAARSSIVDLLFRTAESDIRNGERRWLEVLNVLPVSAAHLIRQRAEREILSLSLISSSLTTFSSEEDALIYLCIVEELSYSIPDEFSPSSMGADLGDKMFLLLQKTVELANAKKGTDLESGASSTALGVAELSIGVWFFVLLRLVALHRSLVPPNCDSRTEINHQTRLLVQICCISRSPLFARRSTQSFISSISTFTKCDSLLRMLPSSWANLQLQALDVCSTLVDTLSDEARYECARFLRDKCPAFLHPQNDARLLFLFGPIIESQSITTHGSSRASTSTPVTNLTQHVQSTPPPSQNTLTPGMVEEPNLFTNKLRFQQNGRITGPYPPKPWEMLGDAAPIIGINDTPVNLAYFGTRQSKRL.

Disordered stretches follow at residues 1 to 73 and 128 to 173; these read MASL…TKRQ and QGSL…VNQN. A compositionally biased stretch (low complexity) spans 13-26; it reads SSRPSMSCGNSSSS. Polar residues predominate over residues 32 to 42; the sequence is GHSQRPSQTDP.

Belongs to the Mediator complex subunit 12 family. As to quaternary structure, component of the SRB8-11 complex, which itself associates with the Mediator complex.

The protein localises to the nucleus. Functionally, component of the SRB8-11 complex. The SRB8-11 complex is a regulatory module of the Mediator complex which is itself involved in regulation of basal and activated RNA polymerase II-dependent transcription. The SRB8-11 complex may be involved in the transcriptional repression of a subset of genes regulated by Mediator. It may inhibit the association of the Mediator complex with RNA polymerase II to form the holoenzyme complex. This chain is Mediator of RNA polymerase II transcription subunit 12 (SRB8), found in Coccidioides immitis (strain RS) (Valley fever fungus).